A 145-amino-acid chain; its full sequence is Histone H2B (145 aa).

The disordered stretch occupies residues 1–52 (MAPKAAAGKKPAEKKPVEEKKAEEVPAEKKPKAGKKLPKDAGRPDKKKKRAK). 3 positions are modified to N6-acetyllysine: Lys-9, Lys-35, and Lys-36. The segment covering 10 to 44 (KPAEKKPVEEKKAEEVPAEKKPKAGKKLPKDAGRP) has biased composition (basic and acidic residues). Residue Lys-141 forms a Glycyl lysine isopeptide (Lys-Gly) (interchain with G-Cter in ubiquitin) linkage.

It belongs to the histone H2B family. The nucleosome is a histone octamer containing two molecules each of H2A, H2B, H3 and H4 assembled in one H3-H4 heterotetramer and two H2A-H2B heterodimers. The octamer wraps approximately 147 bp of DNA. In terms of processing, can be acetylated to form H2BK6ac, H2BK33ac and H2BK34ac. Monoubiquitinated to form H2BK143ub1; may give a specific tag for epigenetic transcriptional activation. As to expression, in anthers, floral buds, pollen, petals and fruits.

Its subcellular location is the nucleus. The protein localises to the chromosome. Its function is as follows. Core component of nucleosome. Nucleosomes wrap and compact DNA into chromatin, limiting DNA accessibility to the cellular machineries which require DNA as a template. Histones thereby play a central role in transcription regulation, DNA repair, DNA replication and chromosomal stability. DNA accessibility is regulated via a complex set of post-translational modifications of histones, also called histone code, and nucleosome remodeling. The polypeptide is Histone H2B (HIS2B) (Capsicum annuum (Capsicum pepper)).